The sequence spans 313 residues: Probable F-box protein At3g44130 (313 aa).

The F-box domain occupies methionine 1–serine 46.

This chain is Probable F-box protein At3g44130, found in Arabidopsis thaliana (Mouse-ear cress).